The primary structure comprises 943 residues: Isoleucine--tRNA ligase (943 aa).

The short motif at 59–69 (PYANGRIHLGH) is the 'HIGH' region element. Glu577 contacts L-isoleucyl-5'-AMP. The 'KMSKS' region signature appears at 618-622 (KMSKS). Lys621 provides a ligand contact to ATP. Zn(2+) contacts are provided by Cys906, Cys909, Cys926, and Cys929.

The protein belongs to the class-I aminoacyl-tRNA synthetase family. IleS type 1 subfamily. In terms of assembly, monomer. Zn(2+) serves as cofactor.

It is found in the cytoplasm. It carries out the reaction tRNA(Ile) + L-isoleucine + ATP = L-isoleucyl-tRNA(Ile) + AMP + diphosphate. Functionally, catalyzes the attachment of isoleucine to tRNA(Ile). As IleRS can inadvertently accommodate and process structurally similar amino acids such as valine, to avoid such errors it has two additional distinct tRNA(Ile)-dependent editing activities. One activity is designated as 'pretransfer' editing and involves the hydrolysis of activated Val-AMP. The other activity is designated 'posttransfer' editing and involves deacylation of mischarged Val-tRNA(Ile). The chain is Isoleucine--tRNA ligase from Stenotrophomonas maltophilia (strain R551-3).